We begin with the raw amino-acid sequence, 136 residues long: Single-stranded DNA-binding protein 1 (136 aa).

Positions 4–109 constitute an SSB domain; sequence LNKMQLIGNL…IMAKEMQMLG (106 aa). Residues 109 to 136 form a disordered region; that stretch reads GKKQDNNKVGNARHGDALPADEDDYYDF. Acidic residues predominate over residues 127–136; it reads PADEDDYYDF.

As to quaternary structure, homotetramer.

The polypeptide is Single-stranded DNA-binding protein 1 (ssb1) (Xylella fastidiosa (strain 9a5c)).